The following is a 506-amino-acid chain: MENLSERFNALQEQLMNIYEAAEQTLKAQILHWQTLRKEAVTLYFARQKGINRLGYQPVPALAISEARAKEAIYMVLQLESLQKSAFALEPWTLVDTSTETFKSAPENHFKKGPVPVEVIYDKDEANANLYTMWTFVYYMDSDDVWHKTTSGVNQTGIYYLYGTFKHYYVLFADDAKRYSATGEWEVKVNKETVFTPVTSSTPPGSPGGQTDPDTSSKTPTTTTAATDTSPRRQSINKQSQQTETKRRGYGRRPSSRTRRPQTHQRRSRSRSRSRSSSQTHSSTTTTTTTYRSRSTSLNKTRARSRSRSTSRSTSTTSRRGGRGSSTRQRSRSPSTYTSKRSREGNTRGRGRGRQGRAGSSGGREQRRRRRSFSTSPDSSKRVRRESPKYRGVSPSEVGKQLRSVGAKHSGRLGRLLEEARDPPVILVRGDANTLKCFRNRARNKYRGLFRSFSTTFSWVAGDSIERLGRSRMLISFSCLTQRRDFDDAVKYPKGVEWSYGSLDSL.

The segment at 1 to 201 (MENLSERFNA…ETVFTPVTSS (201 aa)) is transactivation domain. The span at 196-229 (TPVTSSTPPGSPGGQTDPDTSSKTPTTTTAATDT) shows a compositional bias: low complexity. Positions 196–406 (TPVTSSTPPG…EVGKQLRSVG (211 aa)) are disordered. The segment covering 232–243 (RRQSINKQSQQT) has biased composition (polar residues). Residues 248 to 274 (RGYGRRPSSRTRRPQTHQRRSRSRSRS) are compositionally biased toward basic residues. 2 stretches are compositionally biased toward low complexity: residues 275 to 297 (RSSS…RSTS) and 310 to 339 (TSRS…TYTS). Residues 379 to 389 (SSKRVRRESPK) show a composition bias toward basic and acidic residues. A DNA-binding domain region spans residues 422 to 506 (DPPVILVRGD…EWSYGSLDSL (85 aa)).

The protein belongs to the papillomaviridae E2 protein family. In terms of assembly, binds DNA as homodimer. Interacts with protein E1; this interaction greatly increases E1 DNA-binding activity. Interacts with protein L1; this interaction enhances E2-dependent replication and transcription activation. Interacts with protein L2; this interaction inhibits E2 transcriptional activity but not DNA replication function E2. Interacts with protein E7; this interaction inhibits E7 oncogenic activity. Interacts with host TAF1; this interaction modulates E2-dependent transcriptional regulation. Interacts with host BRD4; this interaction mediates E2 transcriptional activation function. Additionally, the interaction with host BRD4 on mitotic chromosomes mediates tethering of the viral genome. Interacts with host TOPBP1; this interaction is required for optimal viral DNA replication. In terms of processing, phosphorylated.

The protein resides in the host nucleus. Functionally, plays a role in the initiation of viral DNA replication. A dimer of E2 interacts with a dimer of E1 in order to improve specificity of E1 DNA binding activity. Once the complex recognizes and binds DNA at specific sites, the E2 dimer is removed from DNA. E2 also regulates viral transcription through binding to the E2RE response element (5'-ACCNNNNNNGGT-3') present in multiple copies in the regulatory regions of the viral genome. Activates or represses transcription depending on E2RE's position with regards to proximal promoter elements including the TATA-box. Repression occurs by sterically hindering the assembly of the transcription initiation complex. The protein is Regulatory protein E2 of Homo sapiens (Human).